The primary structure comprises 171 residues: Adenine phosphoribosyltransferase (171 aa).

This sequence belongs to the purine/pyrimidine phosphoribosyltransferase family. Homodimer.

It localises to the cytoplasm. It carries out the reaction AMP + diphosphate = 5-phospho-alpha-D-ribose 1-diphosphate + adenine. It functions in the pathway purine metabolism; AMP biosynthesis via salvage pathway; AMP from adenine: step 1/1. Catalyzes a salvage reaction resulting in the formation of AMP, that is energically less costly than de novo synthesis. In Rhodospirillum rubrum (strain ATCC 11170 / ATH 1.1.1 / DSM 467 / LMG 4362 / NCIMB 8255 / S1), this protein is Adenine phosphoribosyltransferase.